We begin with the raw amino-acid sequence, 156 residues long: Ribosomal RNA large subunit methyltransferase H (156 aa).

S-adenosyl-L-methionine contacts are provided by residues leucine 73, glycine 104, and 123–128 (LSSLTL).

It belongs to the RNA methyltransferase RlmH family. As to quaternary structure, homodimer.

The protein localises to the cytoplasm. It carries out the reaction pseudouridine(1915) in 23S rRNA + S-adenosyl-L-methionine = N(3)-methylpseudouridine(1915) in 23S rRNA + S-adenosyl-L-homocysteine + H(+). In terms of biological role, specifically methylates the pseudouridine at position 1915 (m3Psi1915) in 23S rRNA. This chain is Ribosomal RNA large subunit methyltransferase H, found in Bordetella avium (strain 197N).